We begin with the raw amino-acid sequence, 324 residues long: MKPSVILYKSLPDDLLARLESHFNVTRVPDLSPETIEAHASAFSEAQGLLGSSEKVDAALLEKMPALRAASTVSVGYDNFDVDALSAKKIALMHTPTVLTETVADTLMTLVLTTARRALEVAERVKAGEWTGSIGPDWFGCDVHHKTLGIVGMGRIGLALAQRAHFGFNMPILYNARRHHSEAEERFNARYCDLDTLLAESDFVCVILPLTDETHHMIGAEQFRKMKKSAIFINAGRGPVVDENALIAALQSGEIHAAGLDVFEQEPLSKDSPLLTMKNVVALPHIGSATHETRYNMAACAVDNLINALNGDVSQNCVNPKAVK.

Active-site residues include Arg-237 and Glu-266. His-285 acts as the Proton donor in catalysis.

The protein belongs to the D-isomer specific 2-hydroxyacid dehydrogenase family. GhrB subfamily. As to quaternary structure, homodimer.

The protein resides in the cytoplasm. The catalysed reaction is glycolate + NADP(+) = glyoxylate + NADPH + H(+). It carries out the reaction (R)-glycerate + NAD(+) = 3-hydroxypyruvate + NADH + H(+). It catalyses the reaction (R)-glycerate + NADP(+) = 3-hydroxypyruvate + NADPH + H(+). Functionally, catalyzes the NADPH-dependent reduction of glyoxylate and hydroxypyruvate into glycolate and glycerate, respectively. This chain is Glyoxylate/hydroxypyruvate reductase B, found in Cronobacter sakazakii (strain ATCC BAA-894) (Enterobacter sakazakii).